Consider the following 229-residue polypeptide: Potassium/proton antiporter CemA (229 aa).

4 helical membrane passes run Phe7–Phe27, Ile114–Leu134, Leu145–His165, and Ile189–Val209.

The protein belongs to the CemA family.

It localises to the plastid. The protein resides in the chloroplast inner membrane. It carries out the reaction K(+)(in) + H(+)(out) = K(+)(out) + H(+)(in). Its function is as follows. Contributes to K(+)/H(+) antiport activity by supporting proton efflux to control proton extrusion and homeostasis in chloroplasts in a light-dependent manner to modulate photosynthesis. Prevents excessive induction of non-photochemical quenching (NPQ) under continuous-light conditions. Indirectly promotes efficient inorganic carbon uptake into chloroplasts. The protein is Potassium/proton antiporter CemA of Daucus carota (Wild carrot).